The primary structure comprises 152 residues: Large ribosomal subunit protein uL13 (152 aa).

The protein belongs to the universal ribosomal protein uL13 family. Part of the 50S ribosomal subunit.

Its function is as follows. This protein is one of the early assembly proteins of the 50S ribosomal subunit, although it is not seen to bind rRNA by itself. It is important during the early stages of 50S assembly. In Borreliella afzelii (strain PKo) (Borrelia afzelii), this protein is Large ribosomal subunit protein uL13.